The chain runs to 489 residues: Metal cation symporter ZIP14 (489 aa).

The first 28 residues, 1-28 (MKRLHPALPSCLLLVLFGIWRTAPQTHA), serve as a signal peptide directing secretion. Topologically, residues 29–155 (SSAGLPPLSA…PSAIEVWGYG (127 aa)) are extracellular. 4 N-linked (GlcNAc...) asparagine glycosylation sites follow: Asn52, Asn75, Asn85, and Asn100. The helical transmembrane segment at 156 to 176 (FLCVTVISLCSLMGASVVPFM) threads the bilayer. The Cytoplasmic portion of the chain corresponds to 177 to 184 (KKTFYKRL). Residues 185–205 (LLYFIALAIGTLYSNALFQLI) traverse the membrane as a helical segment. The Extracellular portion of the chain corresponds to 206–221 (PEAFGFNPQDNYVSKS). Residues 222–242 (AVVFGGFYLFFFTEKILKMLL) form a helical membrane-spanning segment. The Cytoplasmic segment spans residues 243 to 349 (KQKNEHHHGH…SDGLHNFIDG (107 aa)). Positions 248-255 (HHHGHNHF) match the HHHGHXHX-motif motif. The helical transmembrane segment at 350-370 (LAIGASFTVSVFQGISTSVAI) threads the bilayer. Residues 371–394 (LCEEFPHELGDFVILLNAGMSIQQ) lie on the Extracellular side of the membrane. The short motif at 373–378 (EEFPHE) is the XEXPHE-motif element. The helical transmembrane segment at 395-415 (ALFFNFLSACCCYLGLAFGIL) threads the bilayer. The Cytoplasmic portion of the chain corresponds to 416-421 (AGSHFS). The helical transmembrane segment at 422-442 (ANWIFALAGGMFLYIALADMF) threads the bilayer. Residues 443 to 457 (PEMNEVCQEDEKNDS) are Extracellular-facing. The chain crosses the membrane as a helical span at residues 458 to 478 (FLVPFVIQNLGLLTGFSIMLV). Residues 479 to 489 (LTMYSGQIQIG) are Cytoplasmic-facing.

The protein belongs to the ZIP transporter (TC 2.A.5) family. As to quaternary structure, homotrimer. Post-translationally, ubiquitinated. Ubiquitination occurs upon iron depletion. The ubiquitinated form undergoes proteasomal degradation. N-glycosylated. N-glycosylation at Asn-100 is required for iron-regulated extraction of the transporter from membranes and subsequent proteasomal degradation. In terms of tissue distribution, widely expressed. Highly and transiently expressed during the early stage of adipocyte differentiation. Strongly expressed in liver, preadipocyte, duodenum and jejunum, moderately in brain, heart, skeletal muscle, spleen, pancreas, kidney and white adipose cells. Expression is almost undetectable in lung, testis and brown adipose cells. Expressed by chondrocytes and pituitary cells. More strongly expressed in brain. As to expression, more strongly expressed in liver, kidney and duodenum.

It localises to the cell membrane. Its subcellular location is the apical cell membrane. The protein localises to the basolateral cell membrane. The protein resides in the early endosome membrane. It is found in the late endosome membrane. It localises to the lysosome membrane. It carries out the reaction Zn(2+)(out) + 2 hydrogencarbonate(out) = Zn(2+)(in) + 2 hydrogencarbonate(in). The enzyme catalyses Mn(2+)(out) + 2 hydrogencarbonate(out) = Mn(2+)(in) + 2 hydrogencarbonate(in). It catalyses the reaction Fe(2+)(out) + 2 hydrogencarbonate(out) = Fe(2+)(in) + 2 hydrogencarbonate(in). The catalysed reaction is Cd(2+)(out) + 2 hydrogencarbonate(out) = Cd(2+)(in) + 2 hydrogencarbonate(in). Inhibited by cyanide and therefore dependent of an energy source. Inhibited by DIDS/4,4'-diisothiocyanatostilbene-2,2'-disulfonic acid, an inhibitor hydrogencarbonate-dependent transporters. Its function is as follows. Electroneutral transporter of the plasma membrane mediating the cellular uptake of the divalent metal cations zinc, manganese and iron that are important for tissue homeostasis, metabolism, development and immunity. Functions as an energy-dependent symporter, transporting through the membranes an electroneutral complex composed of a divalent metal cation and two bicarbonate anions. Beside these endogenous cellular substrates, can also import cadmium a non-essential metal which is cytotoxic and carcinogenic. Controls the cellular uptake by the intestinal epithelium of systemic zinc, which is in turn required to maintain tight junctions and the intestinal permeability. Modifies the activity of zinc-dependent phosphodiesterases, thereby indirectly regulating G protein-coupled receptor signaling pathways important for gluconeogenesis and chondrocyte differentiation. Regulates insulin receptor signaling, glucose uptake, glycogen synthesis and gluconeogenesis in hepatocytes through the zinc-dependent intracellular catabolism of insulin. Through zinc cellular uptake also plays a role in the adaptation of cells to endoplasmic reticulum stress. Major manganese transporter of the basolateral membrane of intestinal epithelial cells, it plays a central role in manganese systemic homeostasis through intestinal manganese uptake. Also involved in manganese extracellular uptake by cells of the blood-brain barrier. May also play a role in manganese and zinc homeostasis participating in their elimination from the blood through the hepatobiliary excretion. Also functions in the extracellular uptake of free iron. May also function intracellularly and mediate the transport from endosomes to cytosol of iron endocytosed by transferrin. Plays a role in innate immunity by regulating the expression of cytokines by activated macrophages. The sequence is that of Metal cation symporter ZIP14 from Mus musculus (Mouse).